Reading from the N-terminus, the 129-residue chain is Mitochondrial pyruvate carrier 2 (129 aa).

Topologically, residues Ser2–Thr22 are mitochondrial matrix. A helical membrane pass occupies residues Val23–Phe39. The Mitochondrial intermembrane segment spans residues Ser40–Asn54. The chain crosses the membrane as a helical span at residues Leu55–Ile71. The Mitochondrial matrix segment spans residues Lys72–Arg74. A helical transmembrane segment spans residues Asn75–Tyr91. Residues Gln92–Arg129 are Mitochondrial intermembrane-facing.

It belongs to the mitochondrial pyruvate carrier (MPC) (TC 2.A.105) family. As to quaternary structure, the functional 150 kDa pyruvate import complex is a heteromer of MPC1 and either MPC2 or MPC3.

The protein localises to the mitochondrion. It is found in the mitochondrion inner membrane. The enzyme catalyses pyruvate(out) + H(+)(out) = pyruvate(in) + H(+)(in). Mediates the uptake of pyruvate into mitochondria. The protein is Mitochondrial pyruvate carrier 2 of Saccharomyces cerevisiae (strain ATCC 204508 / S288c) (Baker's yeast).